We begin with the raw amino-acid sequence, 151 residues long: Large ribosomal subunit protein eL19 (151 aa).

Positions 57 to 81 are enriched in basic residues; it reads KKGISSARVKKLKEQRKKGRRRGPG. The interval 57–95 is disordered; it reads KKGISSARVKKLKEQRKKGRRRGPGSRRGAAGARTPPKE.

Belongs to the eukaryotic ribosomal protein eL19 family. In terms of assembly, part of the 50S ribosomal subunit.

Its function is as follows. Binds to the 23S rRNA. In Methanocaldococcus jannaschii (strain ATCC 43067 / DSM 2661 / JAL-1 / JCM 10045 / NBRC 100440) (Methanococcus jannaschii), this protein is Large ribosomal subunit protein eL19.